The following is a 318-amino-acid chain: 4-hydroxy-3-methylbut-2-enyl diphosphate reductase (318 aa).

Position 12 (C12) interacts with [4Fe-4S] cluster. (2E)-4-hydroxy-3-methylbut-2-enyl diphosphate contacts are provided by H41 and H74. Dimethylallyl diphosphate contacts are provided by H41 and H74. Positions 41 and 74 each coordinate isopentenyl diphosphate. C96 contributes to the [4Fe-4S] cluster binding site. Position 124 (H124) interacts with (2E)-4-hydroxy-3-methylbut-2-enyl diphosphate. H124 lines the dimethylallyl diphosphate pocket. H124 is a binding site for isopentenyl diphosphate. E126 functions as the Proton donor in the catalytic mechanism. T168 provides a ligand contact to (2E)-4-hydroxy-3-methylbut-2-enyl diphosphate. C198 is a binding site for [4Fe-4S] cluster. Residues S226, S227, N228, and S270 each contribute to the (2E)-4-hydroxy-3-methylbut-2-enyl diphosphate site. Dimethylallyl diphosphate-binding residues include S226, S227, N228, and S270. Isopentenyl diphosphate is bound by residues S226, S227, N228, and S270.

It belongs to the IspH family. Requires [4Fe-4S] cluster as cofactor.

It carries out the reaction isopentenyl diphosphate + 2 oxidized [2Fe-2S]-[ferredoxin] + H2O = (2E)-4-hydroxy-3-methylbut-2-enyl diphosphate + 2 reduced [2Fe-2S]-[ferredoxin] + 2 H(+). The enzyme catalyses dimethylallyl diphosphate + 2 oxidized [2Fe-2S]-[ferredoxin] + H2O = (2E)-4-hydroxy-3-methylbut-2-enyl diphosphate + 2 reduced [2Fe-2S]-[ferredoxin] + 2 H(+). Its pathway is isoprenoid biosynthesis; dimethylallyl diphosphate biosynthesis; dimethylallyl diphosphate from (2E)-4-hydroxy-3-methylbutenyl diphosphate: step 1/1. It participates in isoprenoid biosynthesis; isopentenyl diphosphate biosynthesis via DXP pathway; isopentenyl diphosphate from 1-deoxy-D-xylulose 5-phosphate: step 6/6. In terms of biological role, catalyzes the conversion of 1-hydroxy-2-methyl-2-(E)-butenyl 4-diphosphate (HMBPP) into a mixture of isopentenyl diphosphate (IPP) and dimethylallyl diphosphate (DMAPP). Acts in the terminal step of the DOXP/MEP pathway for isoprenoid precursor biosynthesis. This Psychrobacter sp. (strain PRwf-1) protein is 4-hydroxy-3-methylbut-2-enyl diphosphate reductase.